The primary structure comprises 133 residues: Large-conductance mechanosensitive channel (133 aa).

Transmembrane regions (helical) follow at residues 14–34 and 67–87; these read VIDL…VSSL and GNFI…FMFV.

It belongs to the MscL family. As to quaternary structure, homopentamer.

The protein localises to the cell membrane. Its function is as follows. Channel that opens in response to stretch forces in the membrane lipid bilayer. May participate in the regulation of osmotic pressure changes within the cell. The sequence is that of Large-conductance mechanosensitive channel from Bacillus mycoides (strain KBAB4) (Bacillus weihenstephanensis).